A 194-amino-acid chain; its full sequence is tRNA (guanosine(18)-2'-O)-methyltransferase (194 aa).

S-adenosyl-L-methionine contacts are provided by residues Thr99, 122–126, Ile142, and Leu151; that span reads GAEKW.

The protein belongs to the class IV-like SAM-binding methyltransferase superfamily. RNA methyltransferase TrmH family. Monomer.

The enzyme catalyses guanosine(18) in tRNA + S-adenosyl-L-methionine = 2'-O-methylguanosine(18) in tRNA + S-adenosyl-L-homocysteine + H(+). Stimulated by magnesium ions and spermine. Inhibited by S-adenosyl-homocysteine. Catalyzes the 2'-O methylation of guanosine at position 18 in tRNA. In Thermus thermophilus (strain ATCC BAA-163 / DSM 7039 / HB27), this protein is tRNA (guanosine(18)-2'-O)-methyltransferase.